Here is a 300-residue protein sequence, read N- to C-terminus: Ribosomal protein L11 methyltransferase (300 aa).

Residues Thr-152, Gly-173, Asp-195, and Asn-234 each coordinate S-adenosyl-L-methionine.

This sequence belongs to the methyltransferase superfamily. PrmA family.

It is found in the cytoplasm. It carries out the reaction L-lysyl-[protein] + 3 S-adenosyl-L-methionine = N(6),N(6),N(6)-trimethyl-L-lysyl-[protein] + 3 S-adenosyl-L-homocysteine + 3 H(+). Functionally, methylates ribosomal protein L11. The chain is Ribosomal protein L11 methyltransferase from Burkholderia ambifaria (strain ATCC BAA-244 / DSM 16087 / CCUG 44356 / LMG 19182 / AMMD) (Burkholderia cepacia (strain AMMD)).